The primary structure comprises 689 residues: Glycine--tRNA ligase beta subunit (689 aa).

Belongs to the class-II aminoacyl-tRNA synthetase family. As to quaternary structure, tetramer of two alpha and two beta subunits.

It localises to the cytoplasm. The catalysed reaction is tRNA(Gly) + glycine + ATP = glycyl-tRNA(Gly) + AMP + diphosphate. This chain is Glycine--tRNA ligase beta subunit, found in Desulforapulum autotrophicum (strain ATCC 43914 / DSM 3382 / VKM B-1955 / HRM2) (Desulfobacterium autotrophicum).